The following is a 210-amino-acid chain: Putative 3-methyladenine DNA glycosylase (210 aa).

The protein belongs to the DNA glycosylase MPG family.

In Lactobacillus helveticus (strain DPC 4571), this protein is Putative 3-methyladenine DNA glycosylase.